We begin with the raw amino-acid sequence, 24 residues long: Brevinin-1Sa (24 aa).

Cys-18 and Cys-24 are joined by a disulfide.

Expressed by the skin glands.

Its subcellular location is the secreted. Antibacterial activity against Gram-negative bacterium E.coli. The polypeptide is Brevinin-1Sa (Lithobates sphenocephalus (Southern leopard frog)).